The primary structure comprises 330 residues: Cathepsin K (330 aa).

A signal peptide spans 1–16 (MWGLEVLLLLPMASFA). Residues 17-115 (LYPEEILDTQ…TLYIPDWESR (99 aa)) constitute a propeptide, activation peptide. A glycan (N-linked (GlcNAc...) asparagine) is linked at Asn-104. 3 disulfide bridges follow: Cys-137–Cys-178, Cys-171–Cys-211, and Cys-270–Cys-319. Residue Cys-140 is part of the active site. Catalysis depends on residues His-277 and Asn-297.

It belongs to the peptidase C1 family.

It is found in the lysosome. The protein resides in the secreted. It localises to the apical cell membrane. The catalysed reaction is Broad proteolytic activity. With small-molecule substrates and inhibitors, the major determinant of specificity is P2, which is preferably Leu, Met &gt; Phe, and not Arg.. Its function is as follows. Thiol protease involved in osteoclastic bone resorption and may participate partially in the disorder of bone remodeling. Displays potent endoprotease activity against fibrinogen at acid pH. May play an important role in extracellular matrix degradation. Involved in the release of thyroid hormone thyroxine (T4) by limited proteolysis of TG/thyroglobulin in the thyroid follicle lumen. This is Cathepsin K (CTSK) from Canis lupus familiaris (Dog).